We begin with the raw amino-acid sequence, 142 residues long: 3-hydroxyacyl-[acyl-carrier-protein] dehydratase FabZ (142 aa).

Histidine 48 is an active-site residue.

Belongs to the thioester dehydratase family. FabZ subfamily.

It is found in the cytoplasm. The catalysed reaction is a (3R)-hydroxyacyl-[ACP] = a (2E)-enoyl-[ACP] + H2O. Involved in unsaturated fatty acids biosynthesis. Catalyzes the dehydration of short chain beta-hydroxyacyl-ACPs and long chain saturated and unsaturated beta-hydroxyacyl-ACPs. The chain is 3-hydroxyacyl-[acyl-carrier-protein] dehydratase FabZ from Ruminiclostridium cellulolyticum (strain ATCC 35319 / DSM 5812 / JCM 6584 / H10) (Clostridium cellulolyticum).